Here is a 154-residue protein sequence, read N- to C-terminus: Ribonuclease H (154 aa).

One can recognise an RNase H type-1 domain in the interval 5-146 (EQNIVYLYCD…ADELANRGID (142 aa)). The Mg(2+) site is built by Asp14, Glu52, Asp74, and Asp138.

Belongs to the RNase H family. As to quaternary structure, monomer. Mg(2+) is required as a cofactor.

The protein resides in the cytoplasm. The enzyme catalyses Endonucleolytic cleavage to 5'-phosphomonoester.. Endonuclease that specifically degrades the RNA of RNA-DNA hybrids. This chain is Ribonuclease H, found in Coxiella burnetii (strain CbuG_Q212) (Coxiella burnetii (strain Q212)).